An 81-amino-acid polypeptide reads, in one-letter code: Cytotoxin 3 (81 aa).

An N-terminal signal peptide occupies residues 1-21; it reads MKTLLLTLVVVTIVCLDLGYT. Intrachain disulfides connect cysteine 24-cysteine 42, cysteine 35-cysteine 59, cysteine 63-cysteine 74, and cysteine 75-cysteine 80.

The protein belongs to the three-finger toxin family. Short-chain subfamily. Type IA cytotoxin sub-subfamily. As to quaternary structure, monomer in solution; Homodimer and oligomer in the presence of negatively charged lipids forming a pore with a size ranging between 20 and 30 Angstroms. Interacts with Kv channel-interacting protein 1 (KCNIP1) in a calcium-independent manner. As to expression, expressed by the venom gland.

The protein resides in the secreted. It localises to the target cell membrane. Functionally, basic protein that binds to cell membrane and depolarizes cardiomyocytes. This cytotoxin also possesses lytic activity on many other cells, including red blood cells. Interaction with sulfatides in the cell membrane induces pore formation and cell internalization. Cytotoxicity is due to pore formation, and to another mechanism independent of membrane-damaging activity. When internalized, it targets the mitochondrial membrane and induces mitochondrial swelling and fragmentation. It inhibits protein kinases C. It binds to the integrin alpha-V/beta-3 (ITGAV/ITGB3) with a moderate affinity. It also binds with high affinity to heparin. The protein is Cytotoxin 3 of Naja atra (Chinese cobra).